The sequence spans 347 residues: Protein-glutamate methylesterase/protein-glutamine glutaminase 4 (347 aa).

Residues 3–121 (KVLIVDDSAS…HPNHEREARS (119 aa)) enclose the Response regulatory domain. Asp54 is subject to 4-aspartylphosphate. Residues 157-342 (PARLKAVAIG…PDRIVTALTS (186 aa)) enclose the CheB-type methylesterase domain. Catalysis depends on residues Ser168, His195, and Asp289.

This sequence belongs to the CheB family. Phosphorylated by CheA. Phosphorylation of the N-terminal regulatory domain activates the methylesterase activity.

The protein localises to the cytoplasm. The catalysed reaction is [protein]-L-glutamate 5-O-methyl ester + H2O = L-glutamyl-[protein] + methanol + H(+). It carries out the reaction L-glutaminyl-[protein] + H2O = L-glutamyl-[protein] + NH4(+). Functionally, involved in chemotaxis. Part of a chemotaxis signal transduction system that modulates chemotaxis in response to various stimuli. Catalyzes the demethylation of specific methylglutamate residues introduced into the chemoreceptors (methyl-accepting chemotaxis proteins or MCP) by CheR. Also mediates the irreversible deamidation of specific glutamine residues to glutamic acid. This is Protein-glutamate methylesterase/protein-glutamine glutaminase 4 from Geobacter metallireducens (strain ATCC 53774 / DSM 7210 / GS-15).